The following is a 114-amino-acid chain: UPF0757 protein YmgG (114 aa).

Belongs to the UPF0757 family.

The protein is UPF0757 protein YmgG of Shigella flexneri.